The following is a 1451-amino-acid chain: Dual 3',5'-cyclic-AMP and -GMP phosphodiesterase 11 (1451 aa).

5 disordered regions span residues 1–54 (MGQA…PQIQ), 75–100 (ATTPLQFQPTGRMNTEQGGTGYGGYG), 125–169 (LPAH…QVQQ), 235–262 (GNDVVSSTSPTHANGQTSSSRGGSGATT), and 327–374 (QHHH…GSGG). The span at 11–21 (RGCRYKNKNKS) shows a compositional bias: basic residues. Over residues 24–45 (QQQQQQQQQQQQQQQHQQQQQQ) the composition is skewed to low complexity. The span at 77 to 91 (TPLQFQPTGRMNTEQ) shows a compositional bias: polar residues. 2 stretches are compositionally biased toward low complexity: residues 135–147 (SGAAPPSSSNGSS) and 160–169 (QQQQQYQVQQ). Residues 235–248 (GNDVVSSTSPTHAN) show a composition bias toward polar residues. Positions 327 to 340 (QHHHNHAHLHHSQH) are enriched in basic residues. The span at 341–355 (SHYQAGGAVGSSSLG) shows a compositional bias: low complexity. Gly residues predominate over residues 356–374 (STGGASGAGGAPSLGGSGG). 2 GAF domains span residues 419–572 (EVRT…GIGL) and 604–754 (TIEH…GMGI). The region spanning 783–1107 (ATMDEAHRLR…GHWIDLADVV (325 aa)) is the PDEase domain. His-860 acts as the Proton donor in catalysis. Residues His-864, His-900, Asp-901, and Asp-1011 each coordinate a divalent metal cation. Disordered regions lie at residues 1109-1171 (TKTS…SNTN), 1200-1248 (DEQA…TPVS), 1268-1305 (QTSNQAQTQKQRCKSCDHSRSGLQVRKTSSLRGAQELD), and 1325-1364 (INNHSHHHNHSHSHNHNHHHHHHHHSHHNHSQHGIGIGSA). Composition is skewed to low complexity over residues 1142 to 1171 (ASEAEVAVDSPSEKASVNGSNVANNSSNTN) and 1218 to 1234 (CRSNSTCSSSTASSCLS). Polar residues predominate over residues 1268–1277 (QTSNQAQTQK). The span at 1328–1355 (HSHHHNHSHSHNHNHHHHHHHHSHHNHS) shows a compositional bias: basic residues.

It belongs to the cyclic nucleotide phosphodiesterase family. The cofactor is a divalent metal cation. In adults, it is enriched in Malpighian tubules.

The catalysed reaction is 3',5'-cyclic GMP + H2O = GMP + H(+). The enzyme catalyses 3',5'-cyclic AMP + H2O = AMP + H(+). Functionally, plays a role in signal transduction by regulating the intracellular concentration of cyclic nucleotides cAMP and cGMP. Dual-specificity phosphodiesterase that catalyzes the hydrolysis of both cAMP and cGMP to 5'-AMP and 5'-GMP, respectively. The protein is Dual 3',5'-cyclic-AMP and -GMP phosphodiesterase 11 (Pde11) of Drosophila melanogaster (Fruit fly).